Reading from the N-terminus, the 259-residue chain is Protein CWC15 homolog (259 aa).

The interval 1 to 182 (MTTAARPTFD…EKKQEDERIR (182 aa)) is disordered. The segment covering 52–71 (DENRNRDFRKELEEREREAR) has biased composition (basic and acidic residues). Low complexity-rich tracts occupy residues 72–82 (SGTGATSSSSG) and 114–126 (QQQA…QQAA). The span at 129–150 (DADEPLDNDSSDSDSDSDDDDA) shows a compositional bias: acidic residues. Positions 150–182 (AALLAELQKIKQERLQETARRESEKKQEDERIR) form a coiled coil. Residues 157–182 (QKIKQERLQETARRESEKKQEDERIR) show a composition bias toward basic and acidic residues.

It belongs to the CWC15 family.

Functionally, involved in pre-mRNA splicing. The protein is Protein CWC15 homolog (c12.1) of Drosophila melanogaster (Fruit fly).